A 544-amino-acid chain; its full sequence is Chaperonin GroEL 1 (544 aa).

ATP is bound by residues 29-32 (TLGP), 86-90 (DGTTT), G413, 479-481 (NAA), and D495.

Belongs to the chaperonin (HSP60) family. As to quaternary structure, forms a cylinder of 14 subunits composed of two heptameric rings stacked back-to-back. Interacts with the co-chaperonin GroES.

It localises to the cytoplasm. The catalysed reaction is ATP + H2O + a folded polypeptide = ADP + phosphate + an unfolded polypeptide.. Its function is as follows. Together with its co-chaperonin GroES, plays an essential role in assisting protein folding. The GroEL-GroES system forms a nano-cage that allows encapsulation of the non-native substrate proteins and provides a physical environment optimized to promote and accelerate protein folding. This is Chaperonin GroEL 1 from Trichormus variabilis (strain ATCC 29413 / PCC 7937) (Anabaena variabilis).